A 205-amino-acid chain; its full sequence is DNA-directed RNA polymerases IV and V subunit 4 (205 aa).

Residues 1–79 are disordered; the sequence is MSEKGGKGLK…TKSSKNSLHS (79 aa). The segment covering 48–60 has biased composition (polar residues); it reads NVSSDQQPFQSSA.

It belongs to the eukaryotic RPB4 RNA polymerase subunit family. As to quaternary structure, component of the RNA polymerase IV and V complexes. Interacts with NRPD1 and NRPE1. As to expression, expressed in shoot meristematic region and in root tips. Detected in cotyledons, flowers and young leaves.

Its subcellular location is the nucleus. In terms of biological role, DNA-dependent RNA polymerase catalyzes the transcription of DNA into RNA using the four ribonucleoside triphosphates as substrates. Component of RNA polymerases IV and V which mediate short-interfering RNAs (siRNA) accumulation and subsequent RNA-directed DNA methylation-dependent (RdDM) transcriptional gene silencing (TGS) of endogenous repeated sequences, including transposable elements. Required for the de novo DNA methylation directed by the RdDM pathway. The sequence is that of DNA-directed RNA polymerases IV and V subunit 4 (NRPD4) from Arabidopsis thaliana (Mouse-ear cress).